Here is a 439-residue protein sequence, read N- to C-terminus: Acyl-coenzyme A thioesterase 9, mitochondrial (439 aa).

The transit peptide at 1 to 21 (MRRAALRLCALGKGQLTPGRG) directs the protein to the mitochondrion. HotDog ACOT-type domains are found at residues 84-209 (KDSY…RDSE) and 289-401 (ENSK…EKEV). K103 is modified (N6-acetyllysine).

It belongs to the acyl coenzyme A hydrolase family. In terms of assembly, interacts with NYAP1, NYAP2 and MYO16.

The protein resides in the mitochondrion. It localises to the mitochondrion matrix. Its subcellular location is the mitochondrion inner membrane. It carries out the reaction butanoyl-CoA + H2O = butanoate + CoA + H(+). The catalysed reaction is propanoyl-CoA + H2O = propanoate + CoA + H(+). It catalyses the reaction hexadecanoyl-CoA + H2O = hexadecanoate + CoA + H(+). The enzyme catalyses octanoyl-CoA + H2O = octanoate + CoA + H(+). It carries out the reaction decanoyl-CoA + H2O = decanoate + CoA + H(+). The catalysed reaction is tetradecanoyl-CoA + H2O = tetradecanoate + CoA + H(+). It catalyses the reaction 4,8-dimethylnonanoyl-CoA + H2O = 4,8-dimethylnonanoate + CoA + H(+). The enzyme catalyses 3-methylbutanoyl-CoA + H2O = 3-methylbutanoate + CoA + H(+). It carries out the reaction 2-methylpropanoyl-CoA + H2O = 2-methylpropanoate + CoA + H(+). The protein operates within lipid metabolism; fatty acid metabolism. Strongly inhibited by NADH and CoA. Functionally, mitochondrial acyl-CoA thioesterase. Catalyzes the hydrolysis of acyl-CoAs into free fatty acids and coenzyme A (CoA), regulating their respective intracellular levels. Regulates both mitochondrial lipid and amino acid metabolism. This is Acyl-coenzyme A thioesterase 9, mitochondrial from Homo sapiens (Human).